The primary structure comprises 512 residues: Acid-sensing ion channel 2 (512 aa).

The Cytoplasmic portion of the chain corresponds to 1-42; it reads MDLKESPSEGSLQPSSIQIFANTSTLHGIRHIFVYGPLTIRR. Serine 8 and serine 11 each carry phosphoserine. The chain crosses the membrane as a helical span at residues 43–64; that stretch reads VLWAVAFVGSLGLLLVESSERV. The Extracellular segment spans residues 65 to 424; it reads SYYFSYQHVT…ETIEQKKAYE (360 aa). Intrachain disulfides connect cysteine 92–cysteine 193, cysteine 289–cysteine 364, cysteine 307–cysteine 360, cysteine 311–cysteine 358, cysteine 320–cysteine 342, and cysteine 322–cysteine 334. N-linked (GlcNAc...) asparagine glycans are attached at residues asparagine 365 and asparagine 392. A helical transmembrane segment spans residues 425–439; it reads VAALLGDIGGQMGLF. The Cytoplasmic portion of the chain corresponds to 440-512; sequence IGASILTILE…TLGTLEEIAC (73 aa). The GAS motif; ion selectivity filter motif lies at 441 to 443; the sequence is GAS.

It belongs to the amiloride-sensitive sodium channel (TC 1.A.6) family. ASIC2 subfamily. As to quaternary structure, can form homotrimers. Heterotrimer; forms functional heterotrimers producing channel with different properties. Forms heterotrimers with ASIC1; while ASIC1 determines current amplitude, ASIC2 influences the properties of the current. Forms heterotrimers with ASIC3; resulting in channels with distinct properties. Interacts with STOM; STOM regulates the gating of ASIC2-containing channels. Interacts with PICK1; promotes ASIC3 phosphorylation by PKC and activation of ASIC2/ASIC3 heterotrimers. In terms of tissue distribution, expressed in brain, cerebellum, trigeminal sensory ganglia and also detected in testis.

It localises to the cell membrane. It carries out the reaction Na(+)(in) = Na(+)(out). The enzyme catalyses K(+)(in) = K(+)(out). It catalyses the reaction Li(+)(in) = Li(+)(out). Inhibited by the diuretic drug amiloride. Inhibited by gadolinium ions, the heterotrimer with ASIC3 being more sensitive. Heterotrimer composed of ASIC1 and ASIC2 are inhibited by the snake venom mambalgin-1. In terms of biological role, forms pH-gated trimeric sodium channels that act as postsynaptic excitatory sensors in the nervous system. Upon extracellular acidification, these channels generate rapid, transient inward currents that fully desensitize. Highly selective for sodium, they are permeable to other cations. By forming heterotrimeric channels with ASIC1, could contribute to synaptic plasticity, learning, and memory. Additionally, as acid sensors at nerve terminals, plays a role in mechanosensation and phototransduction. This Homo sapiens (Human) protein is Acid-sensing ion channel 2.